A 398-amino-acid polypeptide reads, in one-letter code: Acetate kinase (398 aa).

N7 contacts Mg(2+). K14 lines the ATP pocket. R91 serves as a coordination point for substrate. D148 acts as the Proton donor/acceptor in catalysis. Residues 208–212 (HIGNG), 283–285 (DLR), and 331–335 (GVGEN) contribute to the ATP site. E385 provides a ligand contact to Mg(2+).

Belongs to the acetokinase family. As to quaternary structure, homodimer. Mg(2+) serves as cofactor. Mn(2+) is required as a cofactor.

It localises to the cytoplasm. It catalyses the reaction acetate + ATP = acetyl phosphate + ADP. It participates in metabolic intermediate biosynthesis; acetyl-CoA biosynthesis; acetyl-CoA from acetate: step 1/2. In terms of biological role, catalyzes the formation of acetyl phosphate from acetate and ATP. Can also catalyze the reverse reaction. In Porphyromonas gingivalis (strain ATCC 33277 / DSM 20709 / CIP 103683 / JCM 12257 / NCTC 11834 / 2561), this protein is Acetate kinase.